The sequence spans 173 residues: Large ribosomal subunit protein bL9 (173 aa).

Residues 151 to 173 are disordered; sequence YDDTPDRTETEESTKELQEEHAE.

It belongs to the bacterial ribosomal protein bL9 family.

Binds to the 23S rRNA. The sequence is that of Large ribosomal subunit protein bL9 from Lawsonia intracellularis (strain PHE/MN1-00).